The sequence spans 44 residues: Cytochrome b559 subunit beta (44 aa).

The chain crosses the membrane as a helical span at residues 19-35 (WIAVHTLAVPSVFFLGA). His-23 serves as a coordination point for heme.

This sequence belongs to the PsbE/PsbF family. Heterodimer of an alpha subunit and a beta subunit. PSII is composed of 1 copy each of membrane proteins PsbA, PsbB, PsbC, PsbD, PsbE, PsbF, PsbH, PsbI, PsbJ, PsbK, PsbL, PsbM, PsbT, PsbX, PsbY, PsbZ, Psb30/Ycf12, peripheral proteins PsbO, CyanoQ (PsbQ), PsbU, PsbV and a large number of cofactors. It forms dimeric complexes. Requires heme b as cofactor.

It is found in the cellular thylakoid membrane. Its function is as follows. This b-type cytochrome is tightly associated with the reaction center of photosystem II (PSII). PSII is a light-driven water:plastoquinone oxidoreductase that uses light energy to abstract electrons from H(2)O, generating O(2) and a proton gradient subsequently used for ATP formation. It consists of a core antenna complex that captures photons, and an electron transfer chain that converts photonic excitation into a charge separation. This chain is Cytochrome b559 subunit beta, found in Cyanothece sp. (strain PCC 7425 / ATCC 29141).